The chain runs to 709 residues: Molybdenum cofactor sulfurase (709 aa).

Lysine 208 bears the N6-(pyridoxal phosphate)lysine mark. Residue cysteine 367 is part of the active site. The MOSC domain occupies 563–707 (DNALDRQNCR…LESGMSVNFS (145 aa)).

Belongs to the class-V pyridoxal-phosphate-dependent aminotransferase family. MOCOS subfamily. Pyridoxal 5'-phosphate is required as a cofactor.

The catalysed reaction is Mo-molybdopterin + L-cysteine + AH2 = thio-Mo-molybdopterin + L-alanine + A + H2O. The protein operates within cofactor biosynthesis; molybdopterin biosynthesis. In terms of biological role, sulfurates the molybdenum cofactor. Sulfation of molybdenum is essential for xanthine dehydrogenase (XDH) and aldehyde oxidase (ADO) enzymes in which molybdenum cofactor is liganded by 1 oxygen and 1 sulfur atom in active form. The polypeptide is Molybdenum cofactor sulfurase (Caenorhabditis elegans).